A 398-amino-acid polypeptide reads, in one-letter code: Acetate kinase (398 aa).

Asn7 is a binding site for Mg(2+). Lys14 lines the ATP pocket. A substrate-binding site is contributed by Arg91. The active-site Proton donor/acceptor is the Asp148. Residues 208-212 (HIGNG), 283-285 (DMR), and 331-335 (GVGEN) each bind ATP. Residue Glu385 participates in Mg(2+) binding.

It belongs to the acetokinase family. In terms of assembly, homodimer. The cofactor is Mg(2+). It depends on Mn(2+) as a cofactor.

The protein localises to the cytoplasm. The catalysed reaction is acetate + ATP = acetyl phosphate + ADP. It functions in the pathway metabolic intermediate biosynthesis; acetyl-CoA biosynthesis; acetyl-CoA from acetate: step 1/2. In terms of biological role, catalyzes the formation of acetyl phosphate from acetate and ATP. Can also catalyze the reverse reaction. In Porphyromonas gingivalis (strain ATCC BAA-308 / W83), this protein is Acetate kinase.